Consider the following 322-residue polypeptide: Replication-associated protein G2P (322 aa).

The protein belongs to the inovirus G2P protein family.

The catalysed reaction is ATP + (deoxyribonucleotide)n-3'-hydroxyl + 5'-phospho-(deoxyribonucleotide)m = (deoxyribonucleotide)n+m + AMP + diphosphate.. Its function is as follows. Isoform G2P plays an essential role in viral DNA replication. Binds the origin of replication and cleaves the dsDNA replicative form I (RFI) and becomes covalently bound to it via phosphotyrosine bond, generating the dsDNA replicative form II (RFII). In turn, viral DNA replication initiates at the 3'-OH of the cleavage site. After one round of rolling circle synthesis, protein G2P is linked to the newly synthesized ssDNA and joins the ends of the displaced strand to generate a circular single-stranded molecule ready to be packed into a virion. Functionally, isoform G10P protein binds to double-stranded DNA and prevents hydrolysis by nucleases. Additionally, G10P is an inhibitor of DNA replication and may have a role in the transition from semiconservative replicative form DNA replication to single-stranded DNA synthesis in the life cycle. The polypeptide is Replication-associated protein G2P (II) (Escherichia phage If1 (Bacteriophage If1)).